Consider the following 359-residue polypeptide: Cytohesin-interacting protein (359 aa).

Residues 77 to 166 (VVTVEKQDNG…LLTIETLNGT (90 aa)) enclose the PDZ domain. Residues 165-188 (GTMIHRRAELEAKLQTLKQTLKKK) adopt a coiled-coil conformation. Residues 166 to 188 (TMIHRRAELEAKLQTLKQTLKKK) form an interaction with CYTH1 region.

As to quaternary structure, interacts with CYTH1 and SNX27.

The protein localises to the cytoplasm. It is found in the early endosome. Functionally, by its binding to cytohesin-1 (CYTH1), it modifies activation of ARFs by CYTH1 and its precise function may be to sequester CYTH1 in the cytoplasm. The sequence is that of Cytohesin-interacting protein (Cytip) from Mus musculus (Mouse).